The chain runs to 427 residues: MESLTLQPIARVDGAINLPGSKSVSNRALLLAALACGKTVLTNLLDSDDVRHMLNALSALGINYTLSADRTRCDITGNGGPLRASGALELFLGNAGTAMRPLAAALCLGQNEIVLTGEPRMKERPIGHLVDSLRQGGANIDYLEQENYPPLRLRGGFIGGDIEVDGSVSSQFLTALLMTAPLAPEDTIIRVKGELVSKPYIDITLNLMKTFGVEIANHHYQQFVVKGGQQYHSPGRYLVEGDASSASYFLAAGAIKGGTVKVTGIGRKSMQGDIRFADVLEKMGATITWGDDFIACTRGELHAIDMDMNHIPDAAMTIATTALFAKGTTTLRNIYNWRVKETDRLFAMATELRKVGAEVEEGHDYIRITPPAKLHHADIGTYNDHRMAMCFSLVALSDTPVTILDPKCTAKTFPDYFEQLARMSTPA.

Residues Lys-22, Ser-23, and Arg-27 each contribute to the 3-phosphoshikimate site. Lys-22 is a phosphoenolpyruvate binding site. 2 residues coordinate phosphoenolpyruvate: Gly-96 and Arg-124. Positions 169, 170, 171, 197, 313, 336, and 340 each coordinate 3-phosphoshikimate. Gln-171 provides a ligand contact to phosphoenolpyruvate. Asp-313 acts as the Proton acceptor in catalysis. 3 residues coordinate phosphoenolpyruvate: Arg-344, Arg-386, and Lys-411.

It belongs to the EPSP synthase family. Monomer.

It localises to the cytoplasm. It carries out the reaction 3-phosphoshikimate + phosphoenolpyruvate = 5-O-(1-carboxyvinyl)-3-phosphoshikimate + phosphate. It functions in the pathway metabolic intermediate biosynthesis; chorismate biosynthesis; chorismate from D-erythrose 4-phosphate and phosphoenolpyruvate: step 6/7. In terms of biological role, catalyzes the transfer of the enolpyruvyl moiety of phosphoenolpyruvate (PEP) to the 5-hydroxyl of shikimate-3-phosphate (S3P) to produce enolpyruvyl shikimate-3-phosphate and inorganic phosphate. This chain is 3-phosphoshikimate 1-carboxyvinyltransferase, found in Salmonella paratyphi A (strain ATCC 9150 / SARB42).